The sequence spans 262 residues: LysM domain-containing protein ARB_03438 (262 aa).

Positions 1–22 are cleaved as a signal peptide; sequence MVSIPLILGAIILLGTRKAATA. Positions 31–75 constitute a LysM 1 domain; it reads FAVTAATDDTCQSLGAQWGIGMAQFLKWNPGVNCNALVAGKTYCL. The segment at 85-112 is disordered; the sequence is TASLTPSPQVPTTSRATQTMTSKASTGT. Over residues 86–112 the composition is skewed to polar residues; it reads ASLTPSPQVPTTSRATQTMTSKASTGT. A LysM 2 domain is found at 132–179; the sequence is FYHPVSPGDTCQSIVDRYKAFTLDQFYTWNPSVGKNCESLWLGYYVCT. A disordered region spans residues 184–240; sequence GPNSPSQQPPSQQPPSQQSPSQQSPSQQSPSQQPPSQQPPSQQPPSQQSNTSQQTQP. Low complexity predominate over residues 197 to 214; the sequence is PPSQQSPSQQSPSQQSPS. Over residues 215–226 the composition is skewed to pro residues; it reads QQPPSQQPPSQQ. A compositionally biased stretch (low complexity) spans 227-240; that stretch reads PPSQQSNTSQQTQP. Asn233 is a glycosylation site (N-linked (GlcNAc...) asparagine).

Its subcellular location is the secreted. Functionally, might have a role in sequestration of chitin oligosaccharides (breakdown products of fungal cell walls that are released during invasion and act as triggers of host immunity) to dampen host defense. This is LysM domain-containing protein ARB_03438 from Arthroderma benhamiae (strain ATCC MYA-4681 / CBS 112371) (Trichophyton mentagrophytes).